A 467-amino-acid chain; its full sequence is Gustatory and odorant receptor 22 (467 aa).

The Cytoplasmic portion of the chain corresponds to 1 to 106 (MIHTQMEDAQ…MPRTTFTWCS (106 aa)). A helical transmembrane segment spans residues 107–127 (KAFLWAYFIYACETVIVLVVA). Residues 128–144 (RERINKFISTSDKRFDE) are Extracellular-facing. A helical membrane pass occupies residues 145-165 (VIYNIIFMSIMVPHFLLPVAS). The Cytoplasmic portion of the chain corresponds to 166–198 (WRNGSEVAKFKNMWTDFQYKYLIVTGKPIVFPK). A helical transmembrane segment spans residues 199-219 (LYPITWTLCIVSWSLSLVIIL). The Extracellular portion of the chain corresponds to 220–238 (SQYYLQPDFQFCHTFAYYH). The helical transmembrane segment at 239-259 (IIAMLNGFCSLWFVNCTAFGT) threads the bilayer. Topologically, residues 260-304 (ASKAFAKELTDVLATERPAAKLTEYRHLWVDLSHMMQQLGKAYSN) are cytoplasmic. Residues 305-325 (MYGIYCLVIFFTTIIATYGSL) traverse the membrane as a helical segment. The Extracellular portion of the chain corresponds to 326 to 337 (SEIIEHGATYKE). Residues 338-358 (VGLFVIVFYCMSLLFIICNEA) traverse the membrane as a helical segment. Topologically, residues 359-414 (HHASKRVGLNFQERLLNVNLTAVDKATQKEVEMFLVAIDKNPPTMNLDGYANINRG) are cytoplasmic. Residues 415-435 (LITSNISFMATYLVVLMQFKL) form a helical membrane-spanning segment. Topologically, residues 436–467 (TLLRQSAKNAFISALKANLSRIRSLDADKVNT) are extracellular. A glycan (N-linked (GlcNAc...) asparagine) is linked at Asn453.

It belongs to the insect chemoreceptor superfamily. Gustatory receptor (GR) family. Gr21a subfamily. Carbon dioxide-responsive neurons coexpress GPRgr22 and GPRgr24 in the maxillary palp at both larval and adult life stages.

It localises to the cell membrane. Gustatory receptor which mediates acceptance or avoidance behavior, depending on its substrates. GPRgr22 and GPRgr24 together are sufficient for olfactory carbon dioxide-chemosensation. The chain is Gustatory and odorant receptor 22 from Anopheles gambiae (African malaria mosquito).